Here is a 371-residue protein sequence, read N- to C-terminus: 4-hydroxyphenylpyruvate dioxygenase-like protein (371 aa).

VOC domains follow at residues 7–135 (RLCH…LLER) and 160–328 (RVDH…VFTK). Fe cation contacts are provided by His163, His258, and Glu339.

Belongs to the 4HPPD family. It depends on Fe cation as a cofactor.

The protein resides in the mitochondrion. The enzyme catalyses 3-(4-hydroxyphenyl)pyruvate + O2 = (S)-4-hydroxymandelate + CO2. In terms of biological role, iron-dependent dioxygenase that catalyzes the conversion of 4-hydroxyphenylpyruvate (4-HPPA) to 4-hydroxymandelate (4-HMA) in the mitochondria, one of the steps in the biosynthesis of coenzyme Q10 from tyrosine. This chain is 4-hydroxyphenylpyruvate dioxygenase-like protein, found in Homo sapiens (Human).